The following is a 1488-amino-acid chain: Eukaryotic translation initiation factor 4G (1488 aa).

Disordered stretches follow at residues 196-320 (VQHR…GQTS), 337-367 (DSEKVDLTSKVSGLTSATSESSISPILGKSE), and 415-707 (THQI…MTEA). 2 stretches are compositionally biased toward basic and acidic residues: residues 216 to 244 (VSEKESKAPSIPEKHSKESKAPSAVEKHP) and 274 to 299 (ADEKKESLPMTDSLKDNKKNATRNDT). Composition is skewed to polar residues over residues 300–310 (KNLPQQPQSAS), 345–360 (SKVSGLTSATSESSIS), 448–464 (SLATSKPGNSDATSFVT), and 473–495 (CTTSVPEDHSLMNTSHNKDTQTL). Residues 496–520 (SASVDASDVSEVNSGTSSESTSQST) show a composition bias toward low complexity. Residues 555 to 566 (QVKHADGAKDES) show a composition bias toward basic and acidic residues. Positions 627-646 (QEQSESVATSDGADSSSTVD) are enriched in polar residues. Residues 651–671 (LPEESEREVMCEDDGKKKVEP) show a composition bias toward basic and acidic residues. A compositionally biased stretch (polar residues) spans 683–696 (PKLQSSDSGNQASA). An EIF4E-binding region spans residues 709-721 (GRKKYSRDFLLTF). Positions 753 to 784 (DREPHPSSARGSDRPTSRGDRRGPAMDDDKWL) are enriched in basic and acidic residues. Disordered stretches follow at residues 753-795 (DREP…PNRD), 974-1000 (RGEREEAEADKTEEEGEIKQTKEEREE), and 1107-1299 (WQQR…SEEE). The region spanning 883 to 1106 (QRQLKAILNK…RDSIDLRKNK (224 aa)) is the MIF4G domain. The segment covering 978–989 (EEAEADKTEEEG) has biased composition (acidic residues). Composition is skewed to basic and acidic residues over residues 990-1000 (EIKQTKEEREE), 1111-1132 (RKVDGPKKIDEVHRDAAQERHA), 1181-1191 (IRYEQERHQFD), and 1254-1267 (TREDTSSRIPDRFS). The span at 1273–1294 (AAQSASSSHRPASQEGRSGNKS) shows a compositional bias: polar residues. The region spanning 1299 to 1423 (ELREKSIATI…VLQDVGKLIE (125 aa)) is the MI domain.

This sequence belongs to the eukaryotic initiation factor 4G family. EIF4F is a multi-subunit complex, the composition of which varies with external and internal environmental conditions. It is composed of at least EIF4A, EIF4E and EIF4G. In higher plants two isoforms of EIF4F have been identified, named isoform EIF4F and isoform EIF(iso)4F. Isoform EIF4F has subunits p220 and p26, whereas isoform EIF(iso)4F has subunits p82 and p28.

Functionally, component of the protein complex eIF4F, which is involved in the recognition of the mRNA cap, ATP-dependent unwinding of 5'-terminal secondary structure and recruitment of mRNA to the ribosome. This is Eukaryotic translation initiation factor 4G from Triticum aestivum (Wheat).